The sequence spans 239 residues: 6-phosphogluconolactonase (239 aa).

The protein belongs to the glucosamine/galactosamine-6-phosphate isomerase family. 6-phosphogluconolactonase subfamily.

The catalysed reaction is 6-phospho-D-glucono-1,5-lactone + H2O = 6-phospho-D-gluconate + H(+). Its pathway is carbohydrate degradation; pentose phosphate pathway; D-ribulose 5-phosphate from D-glucose 6-phosphate (oxidative stage): step 2/3. Functionally, hydrolysis of 6-phosphogluconolactone to 6-phosphogluconate. In Xylella fastidiosa (strain Temecula1 / ATCC 700964), this protein is 6-phosphogluconolactonase (pgl).